A 202-amino-acid chain; its full sequence is FMN-dependent NADH:quinone oxidoreductase (202 aa).

FMN contacts are provided by residues Ser10, 16 to 18 (SHS), and 96 to 99 (MYNF).

It belongs to the azoreductase type 1 family. As to quaternary structure, homodimer. The cofactor is FMN.

It carries out the reaction 2 a quinone + NADH + H(+) = 2 a 1,4-benzosemiquinone + NAD(+). It catalyses the reaction N,N-dimethyl-1,4-phenylenediamine + anthranilate + 2 NAD(+) = 2-(4-dimethylaminophenyl)diazenylbenzoate + 2 NADH + 2 H(+). In terms of biological role, quinone reductase that provides resistance to thiol-specific stress caused by electrophilic quinones. Functionally, also exhibits azoreductase activity. Catalyzes the reductive cleavage of the azo bond in aromatic azo compounds to the corresponding amines. This is FMN-dependent NADH:quinone oxidoreductase from Hydrogenovibrio crunogenus (strain DSM 25203 / XCL-2) (Thiomicrospira crunogena).